A 427-amino-acid chain; its full sequence is Tol-Pal system protein TolB (427 aa).

A signal peptide spans 1–23 (MKLLKRLVSVFAIVLAVGSNAFA).

It belongs to the TolB family. In terms of assembly, the Tol-Pal system is composed of five core proteins: the inner membrane proteins TolA, TolQ and TolR, the periplasmic protein TolB and the outer membrane protein Pal. They form a network linking the inner and outer membranes and the peptidoglycan layer.

Its subcellular location is the periplasm. Part of the Tol-Pal system, which plays a role in outer membrane invagination during cell division and is important for maintaining outer membrane integrity. This Haemophilus influenzae (strain PittEE) protein is Tol-Pal system protein TolB.